An 862-amino-acid chain; its full sequence is Protein SEY1 (862 aa).

The Cytoplasmic segment spans residues 1–743 (MASNGHFSSV…KRSAIGGITQ (743 aa)). In terms of domain architecture, GB1/RHD3-type G spans 48–301 (GFNYHLISVF…IPADGFAVYA (254 aa)). 58 to 65 (GSQSTGKS) contributes to the GTP binding site. Positions 476-500 (SDYKQELSLFQKDLEKISSQLRKDE) form a coiled coil. Residues 744–764 (VPLYFYGLLLALGWNEIIAVL) form a helical membrane-spanning segment. Residues 765 to 767 (RNP) lie on the Lumenal side of the membrane. The chain crosses the membrane as a helical span at residues 768–788 (IYFIFLLLIGVGAYVTFRLNL). The Cytoplasmic segment spans residues 789-862 (WGPMINMAEA…TSDDDNDDDL (74 aa)). Residues 818-862 (SDSGRQAMAMSGRNARGTEEYEMSSNLKSKGRRTDTSDDDNDDDL) form a disordered region.

It belongs to the TRAFAC class dynamin-like GTPase superfamily. GB1/RHD3 GTPase family. RHD3 subfamily.

Its subcellular location is the endoplasmic reticulum membrane. Its function is as follows. Cooperates with the reticulon proteins and tubule-shaping DP1 family proteins to generate and maintain the structure of the tubular endoplasmic reticulum network. Has GTPase activity, which is required for its function in ER organization. The polypeptide is Protein SEY1 (Arthroderma otae (strain ATCC MYA-4605 / CBS 113480) (Microsporum canis)).